A 443-amino-acid polypeptide reads, in one-letter code: Threonine/serine transporter TdcC (443 aa).

The next 11 helical transmembrane spans lie at 22–42, 44–64, 97–117, 140–160, 163–183, 207–227, 261–281, 312–332, 366–386, 389–409, and 423–443; these read TTWT…FFPI, AGFG…PIAF, GVVI…IYGV, FVAL…KDLM, VMSY…LSLI, ILIT…FSPI, MLMV…LSPA, AITL…KSFF, ISMI…PNIL, IEAM…MYAI, and DNVF…YKLF.

The protein belongs to the amino acid/polyamine transporter 2 family. SdaC/TdcC subfamily.

The protein localises to the cell inner membrane. It catalyses the reaction L-threonine(in) + H(+)(in) = L-threonine(out) + H(+)(out). The catalysed reaction is L-serine(in) + H(+)(in) = L-serine(out) + H(+)(out). Involved in the import of threonine and serine into the cell, with the concomitant import of a proton (symport system). This is Threonine/serine transporter TdcC from Escherichia coli O45:K1 (strain S88 / ExPEC).